Here is a 141-residue protein sequence, read N- to C-terminus: MVHSQLPVAASLRLLCALLLLPSATMIPGGLSPRSVTDPDVREAAEFAVQEYNALSANAYYYKQLRIVEAQSQVVAGAKYYLTMELMKTKCAKTTGKPKVYKEIQNCELPPKAQQEKLTCRFQVWSRPWLKKTELTKMSCN.

An N-terminal signal peptide occupies residues 1 to 26 (MVHSQLPVAASLRLLCALLLLPSATM). Positions 29–129 (GGLSPRSVTD…CRFQVWSRPW (101 aa)) constitute a Cystatin domain. The Secondary area of contact motif lies at 73-77 (QVVAG). Intrachain disulfides connect Cys91/Cys107 and Cys120/Cys140.

Belongs to the cystatin family. In terms of tissue distribution, expressed by the venom gland at an extremely low level (at protein level).

The protein localises to the secreted. Functionally, inhibits various C1 cysteine proteases including cathepsin L, papain and cathepsin B. This protein has no toxic activity and its function in the venom is unknown. It may play a role as a housekeeping or regulatory protein. The polypeptide is Cystatin (Cryptophis nigrescens (Eastern small-eyed snake)).